Consider the following 606-residue polypeptide: Glutamine--fructose-6-phosphate aminotransferase [isomerizing] (606 aa).

C2 acts as the Nucleophile; for GATase activity in catalysis. One can recognise a Glutamine amidotransferase type-2 domain in the interval 2 to 218; that stretch reads CGIFGYLGEK…SGELAVLRIG (217 aa). 2 SIS domains span residues 278 to 424 and 448 to 596; these read FTES…HRQV and LDSS…VDRP. K601 functions as the For Fru-6P isomerization activity in the catalytic mechanism.

In terms of assembly, homodimer.

Its subcellular location is the cytoplasm. It carries out the reaction D-fructose 6-phosphate + L-glutamine = D-glucosamine 6-phosphate + L-glutamate. Its function is as follows. Catalyzes the first step in hexosamine metabolism, converting fructose-6P into glucosamine-6P using glutamine as a nitrogen source. This chain is Glutamine--fructose-6-phosphate aminotransferase [isomerizing], found in Chlamydia trachomatis serovar D (strain ATCC VR-885 / DSM 19411 / UW-3/Cx).